The chain runs to 968 residues: RNA polymerase-associated protein RapA (968 aa).

The 171-residue stretch at 164 to 334 (DVGRRHAPRV…FARLRLLDPN (171 aa)) folds into the Helicase ATP-binding domain. 177–184 (DEVGLGKT) lines the ATP pocket. The short motif at 280–283 (DEAH) is the DEAH box element. In terms of domain architecture, Helicase C-terminal spans 490–662 (RVEWLMGYLT…YLASPDQTEG (173 aa)).

This sequence belongs to the SNF2/RAD54 helicase family. RapA subfamily. Interacts with the RNAP. Has a higher affinity for the core RNAP than for the holoenzyme. Its ATPase activity is stimulated by binding to RNAP.

Transcription regulator that activates transcription by stimulating RNA polymerase (RNAP) recycling in case of stress conditions such as supercoiled DNA or high salt concentrations. Probably acts by releasing the RNAP, when it is trapped or immobilized on tightly supercoiled DNA. Does not activate transcription on linear DNA. Probably not involved in DNA repair. The polypeptide is RNA polymerase-associated protein RapA (Escherichia fergusonii (strain ATCC 35469 / DSM 13698 / CCUG 18766 / IAM 14443 / JCM 21226 / LMG 7866 / NBRC 102419 / NCTC 12128 / CDC 0568-73)).